The following is a 342-amino-acid chain: UDP-N-acetylenolpyruvoylglucosamine reductase (342 aa).

The 171-residue stretch at 13–183 (IDHNAQHIVC…VAVGLRLPKE (171 aa)) folds into the FAD-binding PCMH-type domain. The active site involves arginine 159. Tyrosine 190 contacts substrate. Serine 229 functions as the Proton donor in the catalytic mechanism. Residue glutamate 325 is part of the active site.

The protein belongs to the MurB family. Requires FAD as cofactor.

It localises to the cytoplasm. The enzyme catalyses UDP-N-acetyl-alpha-D-muramate + NADP(+) = UDP-N-acetyl-3-O-(1-carboxyvinyl)-alpha-D-glucosamine + NADPH + H(+). It participates in cell wall biogenesis; peptidoglycan biosynthesis. Functionally, cell wall formation. The chain is UDP-N-acetylenolpyruvoylglucosamine reductase from Escherichia coli O6:H1 (strain CFT073 / ATCC 700928 / UPEC).